The primary structure comprises 617 residues: Mitochondrial Rho GTPase 2 (617 aa).

Residues 1–590 lie on the Cytoplasmic side of the membrane; that stretch reads MKRDVRILLL…LNGSDMSSTS (590 aa). Residues 2-168 enclose the Miro 1 domain; sequence KRDVRILLLG…FYYAQKAVLH (167 aa). Residues glycine 16, lysine 17, threonine 18, and serine 19 each coordinate GTP. Threonine 18 lines the Mg(2+) pocket. Mg(2+) is bound at residue aspartate 57. The GTP site is built by serine 59, asparagine 118, lysine 119, aspartate 121, alanine 149, and lysine 150. EF-hand domains follow at residues 184 to 219 and 304 to 339; these read QCVR…CFGN and LGHQ…LPYM. Ca(2+) contacts are provided by aspartate 197, aspartate 199, aspartate 201, glutamate 208, aspartate 317, aspartate 319, aspartate 321, and glutamate 328. Residues 416–578 form the Miro 2 domain; sequence RTVFLCKVIG…YSKLTWAAMY (163 aa). Residues glycine 428, glycine 430, lysine 431, and threonine 432 each contribute to the GTP site. Mg(2+) is bound by residues threonine 432 and glutamate 474. GTP-binding residues include lysine 528 and aspartate 530. The chain crosses the membrane as a helical; Anchor for type IV membrane protein span at residues 591 to 613; it reads FWLRVTLGATIAAMLGFALYRAF. The Mitochondrial intermembrane segment spans residues 614–617; the sequence is SRHK.

The protein belongs to the mitochondrial Rho GTPase family. Homodimer.

It localises to the mitochondrion outer membrane. It carries out the reaction GTP + H2O = GDP + phosphate + H(+). The enzyme catalyses ATP + H2O = ADP + phosphate + H(+). It catalyses the reaction UTP + H2O = UDP + phosphate + H(+). Functionally, atypical mitochondrial nucleoside-triphosphatase (NTPase) involved in mitochondrial trafficking. Probably involved in control of anterograde transport of mitochondria and their subcellular distribution. Can hydrolyze GTP, ATP and UTP. The chain is Mitochondrial Rho GTPase 2 (rhot2) from Danio rerio (Zebrafish).